We begin with the raw amino-acid sequence, 172 residues long: Adenine phosphoribosyltransferase (172 aa).

Belongs to the purine/pyrimidine phosphoribosyltransferase family. In terms of assembly, homodimer.

It is found in the cytoplasm. The catalysed reaction is AMP + diphosphate = 5-phospho-alpha-D-ribose 1-diphosphate + adenine. It participates in purine metabolism; AMP biosynthesis via salvage pathway; AMP from adenine: step 1/1. In terms of biological role, catalyzes a salvage reaction resulting in the formation of AMP, that is energically less costly than de novo synthesis. In Streptococcus pyogenes serotype M5 (strain Manfredo), this protein is Adenine phosphoribosyltransferase.